The chain runs to 238 residues: MLELITLKNIHVSFSGRSILSNISFSLLSNRIITLIGPNGAGKSTLIRVILGLIQPNLGNIIRSPKISVGYVPQKLYFNNLLPITVEKFMKLSKRKKNINILKILKRVKAQSLQYSRLQNLSGGEMQRILLARALLNNPNLLVLDEPTQGVDVMGQLDLYELINQIRSEMQCSILIVSHDLNFVMAKTNYVICLNKHICCSGTPQTVFKNLEFISIFGLKHIRELAIYQHNHDHVHQY.

Residues isoleucine 5 to lysine 220 form the ABC transporter domain. Glycine 37–serine 44 provides a ligand contact to ATP.

Belongs to the ABC transporter superfamily. Zinc importer (TC 3.A.1.15.5) family. In terms of assembly, the complex is composed of two ATP-binding proteins (ZnuC), two transmembrane proteins (ZnuB) and a solute-binding protein (ZnuA).

It is found in the cell inner membrane. It carries out the reaction Zn(2+)(out) + ATP(in) + H2O(in) = Zn(2+)(in) + ADP(in) + phosphate(in) + H(+)(in). Functionally, part of the ABC transporter complex ZnuABC involved in zinc import. Responsible for energy coupling to the transport system. The sequence is that of Zinc import ATP-binding protein ZnuC from Buchnera aphidicola subsp. Schizaphis graminum (strain Sg).